A 696-amino-acid chain; its full sequence is Putative zinc metalloproteinase YIL108W (696 aa).

Lys245 is covalently cross-linked (Glycyl lysine isopeptide (Lys-Gly) (interchain with G-Cter in ubiquitin)). Residue His318 participates in Zn(2+) binding. Residue Glu319 is part of the active site. His322 and His328 together coordinate Zn(2+). Ser361 is subject to Phosphoserine. Residues Lys478, Lys518, Lys579, Lys590, and Lys596 each participate in a glycyl lysine isopeptide (Lys-Gly) (interchain with G-Cter in ubiquitin) cross-link. Positions 522–695 (GIKSPLYGRS…VDAFGIIYGA (174 aa)) constitute a Jacalin-type lectin domain.

The protein belongs to the peptidase M10B family. The cofactor is Zn(2+).

It localises to the cytoplasm. This is Putative zinc metalloproteinase YIL108W from Saccharomyces cerevisiae (strain ATCC 204508 / S288c) (Baker's yeast).